Consider the following 879-residue polypeptide: Nuclear autoantigen Sp-100 (879 aa).

Alanine 2 carries the post-translational modification N-acetylalanine. At serine 18 the chain carries Phosphoserine. Positions aspartate 33–histidine 149 constitute an HSR domain. The tract at residues leucine 154–threonine 245 is disordered. Phosphoserine is present on serine 157. The D-box; recognition signal for CDC20-mediated degradation signature appears at arginine 165–leucine 168. A phosphoserine mark is found at serine 171, serine 180, and serine 228. The segment covering threonine 176 to proline 200 has biased composition (polar residues). A compositionally biased stretch (basic and acidic residues) spans histidine 207–serine 228. A compositionally biased stretch (polar residues) spans leucine 229–cysteine 238. Lysine 241 is covalently cross-linked (Glycyl lysine isopeptide (Lys-Gly) (interchain with G-Cter in SUMO2)). A PxVxL motif motif is present at residues isoleucine 284–lysine 297. Lysine 297 participates in a covalent cross-link: Glycyl lysine isopeptide (Lys-Gly) (interchain with G-Cter in SUMO). Glycyl lysine isopeptide (Lys-Gly) (interchain with G-Cter in SUMO2) cross-links involve residues lysine 300 and lysine 306. 2 positions are modified to phosphoserine: serine 331 and serine 362. Positions glycine 333 to serine 478 are sufficient to mediate interaction with ETS1. The tract at residues isoleucine 345–arginine 386 is disordered. Residues lysine 366 and lysine 387 each participate in a glycyl lysine isopeptide (Lys-Gly) (interchain with G-Cter in SUMO2) cross-link. Phosphoserine is present on residues serine 394, serine 407, serine 409, serine 410, and serine 451. Residues glycine 401–glutamate 596 form a disordered region. Over residues glutamate 466–glutamate 482 the composition is skewed to polar residues. Basic residues predominate over residues serine 530–arginine 591. 2 short sequence motifs (nuclear localization signal) span residues lysine 536 to aspartate 553 and lysine 568 to isoleucine 592. Residue lysine 594 forms a Glycyl lysine isopeptide (Lys-Gly) (interchain with G-Cter in SUMO2) linkage. The 82-residue stretch at aspartate 595–proline 676 folds into the SAND domain. 2 consecutive DNA-binding regions (HMG box) follow at residues glutamate 677–isoleucine 753 and proline 769–arginine 837. Positions lysine 717–phenylalanine 734 match the Nuclear localization signal motif. A disordered region spans residues alanine 835 to lysine 879. Residues alanine 838–lysine 857 are compositionally biased toward basic residues. Over residues glutamate 861 to lysine 879 the composition is skewed to acidic residues.

In terms of assembly, homodimer; isoforms are able to heterodimerize. Interacts with members of the HP1 family of nonhistone chromosomal protein, such as CBX5 and CBX3 via the PxVxL motif. Interacts with ETS1; the interaction is direct and modulates ETS1 transcriptional activity. Interacts with the MRN complex which is composed of two heterodimers RAD50/MRE11 associated with a single NBN; recruits the complex to PML-related bodies. Interacts with HIPK2; positively regulates TP53-dependent transcription. Interacts with CASP8AP2; may negatively regulate CASP8AP2 export from the nucleus to the cytoplasm. Interacts with SUMO1P1/SUMO5. As to quaternary structure, (Microbial infection) Interacts with Epstein-Barr virus EBNA-LP; this interaction is important for EBNA-LP coactivator activity. (Microbial infection) Interacts with human cytomegalovirus/HHV-5 protein UL123; may play a role in infection by the virus. Sumoylated. Sumoylation depends on a functional nuclear localization signal but is not necessary for nuclear import or nuclear body targeting. Post-translationally, sumoylated. Sumoylated with SUMO1. Sumoylation depends on a functional nuclear localization signal but is not necessary for nuclear import or nuclear body targeting. Sumoylation may stabilize the interaction with CBX5. In terms of processing, (Microbial infection) Immediate early protein IE1 of human cytomegalovirus (HHV-5) interferes with the sumoylation of SP100. In terms of tissue distribution, widely expressed. Sp100-B is expressed only in spleen, tonsil, thymus, mature B-cell line and some T-cell line, but not in brain, liver, muscle or non-lymphoid cell lines.

It is found in the nucleus. The protein localises to the PML body. Its subcellular location is the nuclear body. The protein resides in the cytoplasm. In terms of biological role, together with PML, this tumor suppressor is a major constituent of the PML bodies, a subnuclear organelle involved in a large number of physiological processes including cell growth, differentiation and apoptosis. Functions as a transcriptional coactivator of ETS1 and ETS2 according to PubMed:11909962. Under certain conditions, it may also act as a corepressor of ETS1 preventing its binding to DNA according to PubMed:15247905. Through the regulation of ETS1 it may play a role in angiogenesis, controlling endothelial cell motility and invasion. Through interaction with the MRN complex it may be involved in the regulation of telomeres lengthening. May also regulate TP53-mediated transcription and through CASP8AP2, regulate FAS-mediated apoptosis. Also plays a role in infection by viruses, including human cytomegalovirus and Epstein-Barr virus, through mechanisms that may involve chromatin and/or transcriptional regulation. The polypeptide is Nuclear autoantigen Sp-100 (SP100) (Homo sapiens (Human)).